The sequence spans 166 residues: Bacterial microcompartment shell protein EutK (166 aa).

Residues Ala-4 to Thr-88 enclose the BMC domain. In terms of domain architecture, EutK-Ctail spans Glu-109 to Pro-165.

The protein belongs to the bacterial microcompartments protein family. In terms of assembly, monomeric in solution.

It is found in the bacterial microcompartment. The protein operates within amine and polyamine degradation; ethanolamine degradation. Probably a minor component of the bacterial microcompartment (BMC) shell dedicated to ethanolamine degradation. It might bind nucleic acids. This chain is Bacterial microcompartment shell protein EutK (eutK), found in Escherichia coli (strain K12).